The sequence spans 137 residues: MLSPKRTKFRKQQRGRMRGNANSGNKISFGQYALQALEPSWITSRQIEAARRAMTRYIRRGGKIWIRVFPDKPVTMRAAETRMGSGKGAPEYWVAVVKPGRIMFELGGVVEEIAREAMRLASFKLPIKTRFIVREED.

The span at 1-17 (MLSPKRTKFRKQQRGRM) shows a compositional bias: basic residues. A disordered region spans residues 1–24 (MLSPKRTKFRKQQRGRMRGNANSG).

Belongs to the universal ribosomal protein uL16 family. As to quaternary structure, part of the 50S ribosomal subunit.

Functionally, binds 23S rRNA and is also seen to make contacts with the A and possibly P site tRNAs. The sequence is that of Large ribosomal subunit protein uL16 from Trichodesmium erythraeum (strain IMS101).